The primary structure comprises 380 residues: Protein neprosin (380 aa).

Residues 1–24 (MQAKFFTFVILSSVFYFNYPLAEA) form the signal peptide. Positions 25–128 (RSIQARLANK…QFPNLKFAPP (104 aa)) are cleaved as a propeptide — activation peptide. The cysteines at positions 52 and 98 are disulfide-linked. 3 N-linked (GlcNAc...) asparagine glycosylation sites follow: asparagine 68, asparagine 145, and asparagine 152. The 252-residue stretch at 129 to 380 (SANTNHQYAV…YLFYGGPGCQ (252 aa)) folds into the Neprosin PEP catalytic domain. The active site involves glutamate 188. The cysteines at positions 219 and 224 are disulfide-linked. The N-linked (GlcNAc...) asparagine glycan is linked to asparagine 253. Glutamate 297 is an active-site residue. A disulfide bridge links cysteine 358 with cysteine 379.

It belongs to the peptidase G3 family.

The protein localises to the secreted. The catalysed reaction is Hydrolysis of Pro-|-Xaa &gt;&gt; Ala-|-Xaa in oligopeptides.. Weakly inhibited by the aspartic protease inhibitor pepstatin. Weakly inhibited by pepstatin A (IC(50) of 140 uM) and 1,2-epoxy-3-(p-nitrophenoxy)propane (EPNP) (IC(50) of 480 uM). Activity is not affected by the POP inhibitor Z-Pro-prolinal inhibitor or the denaturant urea. In terms of biological role, glutamic endopeptidase that preferentially cleaves peptide bonds on the C-terminal side of proline residues. Also cleaves peptide bonds on the C-terminal side of alanine residues but with less efficiency. In contrast to most proline-cleaving enzymes, effectively degrades proteins of any size. Found in the viscoelastic fluid of the pitcher, and so likely functions in the digestion of their prey. The chain is Protein neprosin from Nepenthes x ventrata (Red tropical pitcher plant).